The chain runs to 78 residues: Large ribosomal subunit protein bL28 (78 aa).

The segment at 1–27 is disordered; the sequence is MSAYCQVTGRKPSFGKSVSHSHRRTNR.

Belongs to the bacterial ribosomal protein bL28 family.

The protein is Large ribosomal subunit protein bL28 of Corynebacterium kroppenstedtii (strain DSM 44385 / JCM 11950 / CIP 105744 / CCUG 35717).